We begin with the raw amino-acid sequence, 81 residues long: Toxin MIT1 (81 aa).

5 disulfides stabilise this stretch: cysteine 7–cysteine 19, cysteine 13–cysteine 31, cysteine 18–cysteine 59, cysteine 41–cysteine 67, and cysteine 61–cysteine 77.

The protein belongs to the AVIT (prokineticin) family. In terms of tissue distribution, expressed by the venom gland.

It localises to the secreted. Functionally, potent agonist for both PKR1/PROKR1 and PKR2/PROKR2. Potently contracts gastrointestinal (GI) smooth muscle. This Dendroaspis polylepis polylepis (Black mamba) protein is Toxin MIT1.